The following is a 437-amino-acid chain: Cobyrinate a,c-diamide synthase (437 aa).

Positions isoleucine 243–glycine 433 constitute a GATase cobBQ-type domain. The active-site Nucleophile is the cysteine 324.

Belongs to the CobB/CbiA family. Requires Mg(2+) as cofactor.

The catalysed reaction is cob(II)yrinate + 2 L-glutamine + 2 ATP + 2 H2O = cob(II)yrinate a,c diamide + 2 L-glutamate + 2 ADP + 2 phosphate + 2 H(+). The protein operates within cofactor biosynthesis; adenosylcobalamin biosynthesis; cob(II)yrinate a,c-diamide from sirohydrochlorin (anaerobic route): step 10/10. Its function is as follows. Catalyzes the ATP-dependent amidation of the two carboxylate groups at positions a and c of cobyrinate, using either L-glutamine or ammonia as the nitrogen source. This Sulfurisphaera tokodaii (strain DSM 16993 / JCM 10545 / NBRC 100140 / 7) (Sulfolobus tokodaii) protein is Cobyrinate a,c-diamide synthase.